We begin with the raw amino-acid sequence, 385 residues long: Queuine tRNA-ribosyltransferase (385 aa).

Asp93 (proton acceptor) is an active-site residue. Substrate is bound by residues 93–97 (DSGGF), Asp147, Gln191, and Gly218. The RNA binding stretch occupies residues 249–255 (GVGKPED). Asp268 (nucleophile) is an active-site residue. Residues 273–277 (TRNAR) are RNA binding; important for wobble base 34 recognition. Positions 306, 308, 311, and 337 each coordinate Zn(2+).

It belongs to the queuine tRNA-ribosyltransferase family. Homodimer. Within each dimer, one monomer is responsible for RNA recognition and catalysis, while the other monomer binds to the replacement base PreQ1. The cofactor is Zn(2+).

The catalysed reaction is 7-aminomethyl-7-carbaguanine + guanosine(34) in tRNA = 7-aminomethyl-7-carbaguanosine(34) in tRNA + guanine. The protein operates within tRNA modification; tRNA-queuosine biosynthesis. Its function is as follows. Catalyzes the base-exchange of a guanine (G) residue with the queuine precursor 7-aminomethyl-7-deazaguanine (PreQ1) at position 34 (anticodon wobble position) in tRNAs with GU(N) anticodons (tRNA-Asp, -Asn, -His and -Tyr). Catalysis occurs through a double-displacement mechanism. The nucleophile active site attacks the C1' of nucleotide 34 to detach the guanine base from the RNA, forming a covalent enzyme-RNA intermediate. The proton acceptor active site deprotonates the incoming PreQ1, allowing a nucleophilic attack on the C1' of the ribose to form the product. After dissociation, two additional enzymatic reactions on the tRNA convert PreQ1 to queuine (Q), resulting in the hypermodified nucleoside queuosine (7-(((4,5-cis-dihydroxy-2-cyclopenten-1-yl)amino)methyl)-7-deazaguanosine). The sequence is that of Queuine tRNA-ribosyltransferase from Pasteurella multocida (strain Pm70).